Consider the following 60-residue polypeptide: Large ribosomal subunit protein bL32 (60 aa).

The protein belongs to the bacterial ribosomal protein bL32 family.

The chain is Large ribosomal subunit protein bL32 from Pseudothermotoga lettingae (strain ATCC BAA-301 / DSM 14385 / NBRC 107922 / TMO) (Thermotoga lettingae).